Consider the following 45-residue polypeptide: Host translation inhibitor E66L (45 aa).

This sequence belongs to the asfivirus E66L family.

The protein resides in the host endoplasmic reticulum. In terms of biological role, inhibits host protein translation, probably through the EIF2AK2/EIF2S1 signaling pathway. Promotes cell retention in the G0/G1 phase. This chain is Host translation inhibitor E66L, found in Ornithodoros (relapsing fever ticks).